Reading from the N-terminus, the 532-residue chain is Phosphoribosylamine--glycine ligase, chloroplastic (532 aa).

Residues 1–75 (MSSLCASNCY…IQRRLFLLRC (75 aa)) constitute a chloroplast transit peptide. The ATP-grasp domain occupies 204–412 (KNLCHKYNIP…LAKVLLAACK (209 aa)).

This sequence belongs to the GARS family.

It localises to the plastid. It is found in the chloroplast. It carries out the reaction 5-phospho-beta-D-ribosylamine + glycine + ATP = N(1)-(5-phospho-beta-D-ribosyl)glycinamide + ADP + phosphate + H(+). It participates in purine metabolism; IMP biosynthesis via de novo pathway; N(1)-(5-phospho-D-ribosyl)glycinamide from 5-phospho-alpha-D-ribose 1-diphosphate: step 2/2. In Arabidopsis thaliana (Mouse-ear cress), this protein is Phosphoribosylamine--glycine ligase, chloroplastic (PUR2).